The following is a 181-amino-acid chain: Oligoribonuclease (181 aa).

Residues 8–171 (LIWIDLEMTG…QDIQESIAEL (164 aa)) enclose the Exonuclease domain. Y129 is a catalytic residue.

The protein belongs to the oligoribonuclease family.

The protein localises to the cytoplasm. 3'-to-5' exoribonuclease specific for small oligoribonucleotides. The polypeptide is Oligoribonuclease (Shewanella putrefaciens (strain CN-32 / ATCC BAA-453)).